Consider the following 1287-residue polypeptide: DNA-directed RNA polymerase subunit beta (1287 aa).

It belongs to the RNA polymerase beta chain family. As to quaternary structure, the RNAP catalytic core consists of 2 alpha, 1 beta, 1 beta' and 1 omega subunit. When a sigma factor is associated with the core the holoenzyme is formed, which can initiate transcription.

The catalysed reaction is RNA(n) + a ribonucleoside 5'-triphosphate = RNA(n+1) + diphosphate. In terms of biological role, DNA-dependent RNA polymerase catalyzes the transcription of DNA into RNA using the four ribonucleoside triphosphates as substrates. This is DNA-directed RNA polymerase subunit beta from Salinibacter ruber (strain DSM 13855 / M31).